The sequence spans 215 residues: Transcription factor LAX PANICLE 1 (215 aa).

Residues 1–48 (MHDPRGFPIHPQPYHLHPTAGGLGEGRMRGGGRRRPGAKLSTDPQSVA) form a disordered region. The interval 40 to 53 (LSTDPQSVAARERR) is basic motif; degenerate. The 50-residue stretch at 40-89 (LSTDPQSVAARERRHRISDRFRVLRSLVPGGSKMDTVSMLEQAIHYVKFL) folds into the bHLH domain. Positions 54 to 89 (HRISDRFRVLRSLVPGGSKMDTVSMLEQAIHYVKFL) are helix-loop-helix motif.

The protein belongs to the bHLH protein family. As to quaternary structure, efficient DNA binding requires dimerization with another bHLH protein. Interacts with LAX2. In terms of tissue distribution, expressed in the boundary between the shoot apical meristem (SAM) and the region of new meristem formation.

It localises to the nucleus. Transcription factor that seems to regulate organogenesis in postembryonic development. Involved in the regulation of shoot branching by controlling axillary meristem initiation. Functions in association with LAX2 to regulate the process of AM formation. Possesses transactivation activity in yeast. This is Transcription factor LAX PANICLE 1 from Oryza sativa subsp. japonica (Rice).